A 92-amino-acid chain; its full sequence is Small ribosomal subunit protein bS20 (92 aa).

This sequence belongs to the bacterial ribosomal protein bS20 family.

Its function is as follows. Binds directly to 16S ribosomal RNA. The polypeptide is Small ribosomal subunit protein bS20 (Magnetococcus marinus (strain ATCC BAA-1437 / JCM 17883 / MC-1)).